A 126-amino-acid polypeptide reads, in one-letter code: Small ribosomal subunit protein uS8 (126 aa).

The protein belongs to the universal ribosomal protein uS8 family. Part of the 30S ribosomal subunit. Contacts proteins S5 and S12.

One of the primary rRNA binding proteins, it binds directly to 16S rRNA central domain where it helps coordinate assembly of the platform of the 30S subunit. This Nitratidesulfovibrio vulgaris (strain ATCC 29579 / DSM 644 / CCUG 34227 / NCIMB 8303 / VKM B-1760 / Hildenborough) (Desulfovibrio vulgaris) protein is Small ribosomal subunit protein uS8.